We begin with the raw amino-acid sequence, 275 residues long: NH(3)-dependent NAD(+) synthetase (275 aa).

50-57 (GISGGVDS) is a binding site for ATP. Position 56 (Asp56) interacts with Mg(2+). Arg147 provides a ligand contact to deamido-NAD(+). Thr167 lines the ATP pocket. Residue Glu172 coordinates Mg(2+). Residues Lys180 and Asp187 each contribute to the deamido-NAD(+) site. Residues Lys196 and Thr218 each coordinate ATP. 267–268 (HK) is a deamido-NAD(+) binding site.

It belongs to the NAD synthetase family. As to quaternary structure, homodimer.

It catalyses the reaction deamido-NAD(+) + NH4(+) + ATP = AMP + diphosphate + NAD(+) + H(+). It participates in cofactor biosynthesis; NAD(+) biosynthesis; NAD(+) from deamido-NAD(+) (ammonia route): step 1/1. Its function is as follows. Catalyzes the ATP-dependent amidation of deamido-NAD to form NAD. Uses ammonia as a nitrogen source. This Pseudomonas putida (strain GB-1) protein is NH(3)-dependent NAD(+) synthetase.